A 369-amino-acid chain; its full sequence is Putative 2-aminoethylphosphonate import ATP-binding protein PhnT (369 aa).

The region spanning 19 to 250 (IVLDSLRVAY…PPNRFASEFL (232 aa)) is the ABC transporter domain. 51–58 (GPSGSGKT) serves as a coordination point for ATP.

This sequence belongs to the ABC transporter superfamily. 2-aminoethylphosphonate importer (TC 3.A.1.11.5) family.

The protein localises to the cell inner membrane. In terms of biological role, probably part of the PhnSTUV complex (TC 3.A.1.11.5) involved in 2-aminoethylphosphonate import. Probably responsible for energy coupling to the transport system. The polypeptide is Putative 2-aminoethylphosphonate import ATP-binding protein PhnT (phnT) (Salmonella choleraesuis (strain SC-B67)).